Here is a 358-residue protein sequence, read N- to C-terminus: Alanine racemase (358 aa).

The active-site Proton acceptor; specific for D-alanine is Lys34. Lys34 is modified (N6-(pyridoxal phosphate)lysine). Arg129 is a substrate binding site. Tyr254 acts as the Proton acceptor; specific for L-alanine in catalysis. Met302 lines the substrate pocket.

Belongs to the alanine racemase family. Pyridoxal 5'-phosphate serves as cofactor.

The enzyme catalyses L-alanine = D-alanine. The protein operates within amino-acid biosynthesis; D-alanine biosynthesis; D-alanine from L-alanine: step 1/1. Catalyzes the interconversion of L-alanine and D-alanine. May also act on other amino acids. This is Alanine racemase (alr) from Vibrio parahaemolyticus serotype O3:K6 (strain RIMD 2210633).